Consider the following 82-residue polypeptide: Cytochrome b559 subunit alpha (82 aa).

Residues 21 to 35 form a helical membrane-spanning segment; that stretch reads VIHSITIPSLFIAGW. His23 lines the heme pocket.

It belongs to the PsbE/PsbF family. Heterodimer of an alpha subunit and a beta subunit. PSII is composed of 1 copy each of membrane proteins PsbA, PsbB, PsbC, PsbD, PsbE, PsbF, PsbH, PsbI, PsbJ, PsbK, PsbL, PsbM, PsbT, PsbX, PsbY, PsbZ, Psb30/Ycf12, at least 3 peripheral proteins of the oxygen-evolving complex and a large number of cofactors. It forms dimeric complexes. Heme b serves as cofactor.

It localises to the plastid. It is found in the chloroplast thylakoid membrane. Functionally, this b-type cytochrome is tightly associated with the reaction center of photosystem II (PSII). PSII is a light-driven water:plastoquinone oxidoreductase that uses light energy to abstract electrons from H(2)O, generating O(2) and a proton gradient subsequently used for ATP formation. It consists of a core antenna complex that captures photons, and an electron transfer chain that converts photonic excitation into a charge separation. The chain is Cytochrome b559 subunit alpha from Stigeoclonium helveticum (Green alga).